The chain runs to 122 residues: uncharacterized protein (122 aa).

The N-terminal stretch at 1 to 35 (MCCYVGKATKIFLCLAAALIVVGLVLGFGLAHRTW) is a signal peptide. The disordered stretch occupies residues 55 to 83 (YGGGGGGGDPLPATSGAGDTPPGVPLTEP).

This is an uncharacterized protein from Oryza sativa subsp. japonica (Rice).